Here is a 222-residue protein sequence, read N- to C-terminus: MSNVYLMTRAAYVKLSRPVAKAALRAGLTPDIVTLAGTAAAVIGALTLFPIGQLWWGAVVVSFFVLADMLDGAMAREQGGGTRFGAVLDATCDRLGDGAVFAGLTWWAAFGLDSPSLVVATLICLVTSQVISYIKARAEASGLRGDGGIIERPERLVIVLIGAGLSDLPFFPLPWTLHVAMWVLAVASVVTLLQRVHAVRTSPGAMEPLHPANGEKPETSEP.

31-34 (DIVT) serves as a coordination point for a CDP-1,2-diacyl-sn-glycerol. 2 consecutive transmembrane segments (helical) span residues 32–49 (IVTL…LTLF) and 55–74 (WWGA…DGAM). D68 and D71 together coordinate Mg(2+). A CDP-1,2-diacyl-sn-glycerol contacts are provided by G72, R76, and T82. Positions 89 and 93 each coordinate Mg(2+). D93 serves as the catalytic Proton acceptor. 4 helical membrane passes run 95–112 (LGDG…AFGL), 118–136 (VVAT…YIKA), 156–173 (LVIV…FFPL), and 179–196 (VAMW…LQRV).

Belongs to the CDP-alcohol phosphatidyltransferase class-I family. Homodimer. The cofactor is Mg(2+).

It is found in the cell membrane. The protein resides in the secreted. It localises to the cell wall. The catalysed reaction is a CDP-1,2-diacyl-sn-glycerol + 1D-myo-inositol 3-phosphate = a 1,2-diacyl-sn-glycero-3-phospho-(1D-myo-inositol-3-phosphate) + CMP + H(+). It catalyses the reaction 1,2-di-(9Z-octadecenoyl)-sn-glycero-3-cytidine-5'-diphosphate + 1D-myo-inositol 3-phosphate = 1,2-di-(9Z-octadecenoyl)-sn-glycero-3-phospho-(1D-myo-inositol-3-phosphate) + CMP + H(+). The enzyme catalyses 1,2-dihexadecanoyl-sn-glycero-3-CDP + 1D-myo-inositol 3-phosphate = 1,2-dihexadecanoyl-sn-glycero-3-phospho-(1D-myo-inositol-3-phosphate) + CMP + H(+). It functions in the pathway phospholipid metabolism; phosphatidylinositol phosphate biosynthesis. Competitively inhibited by several inositol 1-phosphate analogs, including the phosphonate analog 1-deoxy-1-phosphonomethyl-myo-inositol (Ino-C-P). This leads to inhibition of M.smegmatis growth. Functionally, catalyzes the conjugation of the 1'-hydroxyl group of D-myo-inositol-3-phosphate (also named L-myo-inositol-1-phosphate) with a lipid tail of cytidine diphosphate diacylglycerol (CDP-DAG), forming phosphatidylinositol phosphate (PIP) and CMP. PIP is a precursor of phosphatidylinositol (PI) which is an essential lipid for mycobacteria required for formation of their cell wall. Is essential to the survival of M.smegmatis. The chain is Phosphatidylinositol phosphate synthase from Mycolicibacterium smegmatis (strain ATCC 700084 / mc(2)155) (Mycobacterium smegmatis).